A 364-amino-acid polypeptide reads, in one-letter code: Ferrochelatase (364 aa).

Fe cation is bound by residues His211 and Glu292.

This sequence belongs to the ferrochelatase family.

The protein localises to the cytoplasm. It catalyses the reaction heme b + 2 H(+) = protoporphyrin IX + Fe(2+). Its pathway is porphyrin-containing compound metabolism; protoheme biosynthesis; protoheme from protoporphyrin-IX: step 1/1. Catalyzes the ferrous insertion into protoporphyrin IX. The sequence is that of Ferrochelatase from Nitrosomonas europaea (strain ATCC 19718 / CIP 103999 / KCTC 2705 / NBRC 14298).